A 292-amino-acid chain; its full sequence is Aquaporin-3 (292 aa).

Over 1–24 (MGRQKELVNRCGEMLHIRYRLLRQ) the chain is Cytoplasmic. A helical transmembrane segment spans residues 25-42 (ALAECLGTLILVMFGCGS). Residues 43-56 (VAQVVLSRGTHGGF) are Extracellular-facing. A helical membrane pass occupies residues 57-74 (LTINLAFGFAVTLGILIA). Over 75–78 (GQVS) the chain is Cytoplasmic. An intramembrane region (discontinuously helical) is located at residues 79–92 (GAHLNPAVTFAMCF). The NPA 1 signature appears at 83–85 (NPA). Residues 93-100 (LAREPWIK) are Cytoplasmic-facing. A helical membrane pass occupies residues 101–121 (LPVYTLAQTLGAFLGAGIIFG). At 122–159 (LYYDAIWAFANNQLIVSGPNGTAGIFATYPSGHLDMVN) the chain is on the extracellular side. An N-linked (GlcNAc...) asparagine glycan is attached at Asn-141. The helical transmembrane segment at 160–177 (GFFDQFIGTASLIVCVLA) threads the bilayer. The Cytoplasmic portion of the chain corresponds to 178–189 (IVDPYNNPVPRG). The helical transmembrane segment at 190 to 206 (LEAFTVGLVVLVIGTSM) threads the bilayer. The Extracellular portion of the chain corresponds to 207-210 (GFNS). An intramembrane region (discontinuously helical) is located at residues 211–224 (GYAVNPARDFGPRL). Positions 215-217 (NPA) match the NPA 2 motif. The Extracellular segment spans residues 225–242 (FTAIAGWGSEVFTTGRHW). The chain crosses the membrane as a helical span at residues 243 to 264 (WWVPIVSPLLGSIAGVFVYQLM). Residues 265 to 292 (IGCHLEPPPPSTDEENVKLSHVKHKEQM) are Cytoplasmic-facing.

This sequence belongs to the MIP/aquaporin (TC 1.A.8) family. As to quaternary structure, homotetramer; each monomer provides an independent glycerol/water pore. Could also exist in other oligomeric states.

Its subcellular location is the cell membrane. It localises to the basolateral cell membrane. It carries out the reaction glycerol(in) = glycerol(out). It catalyses the reaction H2O(in) = H2O(out). The enzyme catalyses urea(in) = urea(out). The catalysed reaction is H2O2(out) = H2O2(in). In terms of biological role, aquaglyceroporins form homotetrameric transmembrane channels, with each monomer independently mediating glycerol and water transport across the plasma membrane along their osmotic gradient. Could also be permeable to urea. Also participates in cell permeability to H2O2 and H2O2-mediated signaling. In skin, transports glycerol to the epidermis and stratum corneum, where it maintains hydration, elasticity, and supports lipid biosynthesis for barrier repair. In kidney, contributes to the reabsorption of water, helping the body maintain proper fluid balance. The polypeptide is Aquaporin-3 (Bos taurus (Bovine)).